A 153-amino-acid polypeptide reads, in one-letter code: Nuclear cap-binding protein subunit 2 (153 aa).

MRNA-binding positions include Tyr-17, Tyr-40, 109-113, 120-124, and 130-131; these read RTDWD, RQYGR, and QV. One can recognise an RRM domain in the interval 37-115; it reads CTLYVGNLSF…RIVRTDWDAG (79 aa).

It belongs to the RRM NCBP2 family. In terms of assembly, component of the nuclear cap-binding complex (CBC), a heterodimer composed of ncbp1/cbp80 and ncbp2/cbp20 that interacts with m7GpppG-capped RNA.

Its subcellular location is the nucleus. It is found in the cytoplasm. In terms of biological role, component of the cap-binding complex (CBC), which binds co-transcriptionally to the 5' cap of pre-mRNAs and is involved in various processes such as pre-mRNA splicing, translation regulation, nonsense-mediated mRNA decay, RNA-mediated gene silencing (RNAi) by microRNAs (miRNAs) and mRNA export. The CBC complex is involved in mRNA export from the nucleus, leading to the recruitment of the mRNA export machinery to the 5' end of mRNA and to mRNA export in a 5' to 3' direction through the nuclear pore. The CBC complex is also involved in mediating U snRNA and intronless mRNAs export from the nucleus. The CBC complex is essential for a pioneer round of mRNA translation, before steady state translation when the CBC complex is replaced by cytoplasmic cap-binding protein eIF4E. The pioneer round of mRNA translation mediated by the CBC complex plays a central role in nonsense-mediated mRNA decay (NMD), NMD only taking place in mRNAs bound to the CBC complex, but not on eIF4E-bound mRNAs. The CBC complex enhances NMD in mRNAs containing at least one exon-junction complex (EJC), promoting the interaction between upf1 and upf2. The CBC complex is also involved in 'failsafe' NMD, which is independent of the EJC complex, while it does not participate in Staufen-mediated mRNA decay (SMD). During cell proliferation, the CBC complex is also involved in microRNAs (miRNAs) biogenesis via its interaction with srrt/ars2, thereby being required for miRNA-mediated RNA interference. The CBC complex also acts as a negative regulator of parn, thereby acting as an inhibitor of mRNA deadenylation. In the CBC complex, ncbp2/cbp20 recognizes and binds capped RNAs (m7GpppG-capped RNA) but requires ncbp1/cbp80 to stabilize the movement of its N-terminal loop and lock the CBC into a high affinity cap-binding state with the cap structure. The conventional cap-binding complex with NCBP2 binds both small nuclear RNA (snRNA) and messenger (mRNA) and is involved in their export from the nucleus. This Xenopus laevis (African clawed frog) protein is Nuclear cap-binding protein subunit 2 (ncbp2).